A 119-amino-acid polypeptide reads, in one-letter code: Toxin ICK-11 (119 aa).

A signal peptide spans 1–19 (MMKLYSLVIIATLAAAAFA). 4 disulfides stabilise this stretch: C59/C74, C67/C80, C71/C116, and C73/C87.

The protein belongs to the neurotoxin 25 family. ICK-8 subfamily. In terms of tissue distribution, expressed by the venom gland.

It localises to the secreted. Its function is as follows. Ion channel inhibitor. The protein is Toxin ICK-11 of Trittame loki (Brush-footed trapdoor spider).